The following is a 303-amino-acid chain: Histone deacetylase HDT2 (303 aa).

Residues 100–112 (EMDLDSEDEEEEL) show a composition bias toward acidic residues. The tract at residues 100–282 (EMDLDSEDEE…SGGSVPCKSC (183 aa)) is disordered. Positions 119-133 (ENGKADGKEEQKNQE) are enriched in basic and acidic residues. The span at 154–203 (DSDDSDEDESDDSDEDDSDDSDEGEGLSPDEGDDDSSDEDDTSDDDEEET) shows a compositional bias: acidic residues. The segment covering 204–217 (PTPKKPEAGKKRGA) has biased composition (basic and acidic residues). The C2H2-type zinc-finger motif lies at 277–300 (VPCKSCSKTFNSEMALQAHSKAKH).

Belongs to the histone deacetylase HD2 family. Multimer. Possibly forms a homotrimer with HDT1 and/or HDT3.

It is found in the nucleus. It localises to the nucleolus. In terms of biological role, mediates the deacetylation of lysine residues on the N-terminal part of the core histones (H2A, H2B, H3 and H4). Histone deacetylation gives a tag for epigenetic repression and plays an important role in transcriptional regulation, cell cycle progression and developmental events. The polypeptide is Histone deacetylase HDT2 (HDT2) (Zea mays (Maize)).